The sequence spans 290 residues: Proteasome subunit beta (290 aa).

The propeptide at 1 to 58 (MTTSGGLTGPGAFGRLPQPFHQPGITSFVEFLALQAPDLLPGRLQMPAGGQPPEVPHG) is removed in mature form; by autocatalysis. T59 (nucleophile) is an active-site residue.

This sequence belongs to the peptidase T1B family. In terms of assembly, the 20S proteasome core is composed of 14 alpha and 14 beta subunits that assemble into four stacked heptameric rings, resulting in a barrel-shaped structure. The two inner rings, each composed of seven catalytic beta subunits, are sandwiched by two outer rings, each composed of seven alpha subunits. The catalytic chamber with the active sites is on the inside of the barrel. Has a gated structure, the ends of the cylinder being occluded by the N-termini of the alpha-subunits. Is capped by the proteasome-associated ATPase, ARC.

The protein localises to the cytoplasm. It carries out the reaction Cleavage of peptide bonds with very broad specificity.. It functions in the pathway protein degradation; proteasomal Pup-dependent pathway. Its activity is regulated as follows. The formation of the proteasomal ATPase ARC-20S proteasome complex, likely via the docking of the C-termini of ARC into the intersubunit pockets in the alpha-rings, may trigger opening of the gate for substrate entry. Interconversion between the open-gate and close-gate conformations leads to a dynamic regulation of the 20S proteasome proteolysis activity. In terms of biological role, component of the proteasome core, a large protease complex with broad specificity involved in protein degradation. The protein is Proteasome subunit beta of Acidothermus cellulolyticus (strain ATCC 43068 / DSM 8971 / 11B).